The sequence spans 380 residues: F-box/kelch-repeat protein At3g18720 (380 aa).

In terms of domain architecture, F-box spans 47–94 (LWDKQIPTDLLQEILSRLGLKANIHASLVCKTWLKEAVSVRKFQSRPW). 2 Kelch repeats span residues 190–233 (CVIS…INRC) and 234–279 (IFSN…LVRQ).

The polypeptide is F-box/kelch-repeat protein At3g18720 (Arabidopsis thaliana (Mouse-ear cress)).